Consider the following 372-residue polypeptide: Alanine dehydrogenase (372 aa).

2 residues coordinate substrate: Arg-15 and Lys-75. Catalysis depends on His-96, which acts as the Proton donor/acceptor. NAD(+)-binding positions include Ser-134, 178 to 179, Asp-198, Ser-220, 239 to 240, 266 to 269, Arg-279, and 298 to 301; these read TA, VL, IAID, and VANM. The active-site Proton donor/acceptor is the Asp-269.

The protein belongs to the AlaDH/PNT family. Homohexamer.

Its subcellular location is the cytoplasm. It carries out the reaction L-alanine + NAD(+) + H2O = pyruvate + NH4(+) + NADH + H(+). The protein operates within amino-acid degradation; L-alanine degradation via dehydrogenase pathway; NH(3) and pyruvate from L-alanine: step 1/1. In terms of biological role, catalyzes the reversible reductive amination of pyruvate to L-alanine. A key factor in the assimilation of L-alanine as an energy source via the tricarboxylic acid cycle during sporulation. The protein is Alanine dehydrogenase (ald) of Geobacillus stearothermophilus (Bacillus stearothermophilus).